The sequence spans 80 residues: Raniseptin-6 (80 aa).

The signal sequence occupies residues 1-22 (MAFLKKSLFLVLFLGIVSLSIC). Positions 23–49 (EEEKREGEEEEKQEEENEELSEEELRE) are excised as a propeptide.

It belongs to the frog skin active peptide (FSAP) family. Dermaseptin subfamily. As to expression, expressed by the skin glands.

It localises to the secreted. In terms of biological role, has antibacterial activity. The protein is Raniseptin-6 of Boana raniceps (Chaco tree frog).